The following is a 77-amino-acid chain: DNA-directed RNA polymerase subunit omega (77 aa).

It belongs to the RNA polymerase subunit omega family. In terms of assembly, in cyanobacteria the RNAP catalytic core is composed of 2 alpha, 1 beta, 1 beta', 1 gamma and 1 omega subunit. When a sigma factor is associated with the core the holoenzyme is formed, which can initiate transcription.

The catalysed reaction is RNA(n) + a ribonucleoside 5'-triphosphate = RNA(n+1) + diphosphate. Its function is as follows. Promotes RNA polymerase assembly. Latches the N- and C-terminal regions of the beta' subunit thereby facilitating its interaction with the beta and alpha subunits. This chain is DNA-directed RNA polymerase subunit omega, found in Thermosynechococcus vestitus (strain NIES-2133 / IAM M-273 / BP-1).